A 426-amino-acid chain; its full sequence is Histidine--tRNA ligase (426 aa).

The protein belongs to the class-II aminoacyl-tRNA synthetase family. As to quaternary structure, homodimer.

It is found in the cytoplasm. It catalyses the reaction tRNA(His) + L-histidine + ATP = L-histidyl-tRNA(His) + AMP + diphosphate + H(+). The chain is Histidine--tRNA ligase from Pseudoalteromonas atlantica (strain T6c / ATCC BAA-1087).